A 78-amino-acid polypeptide reads, in one-letter code: uncharacterized protein (78 aa).

Transmembrane regions (helical) follow at residues 13–35 (AGVG…PTGI) and 50–72 (GTTF…FYYF).

It is found in the cell membrane. This is an uncharacterized protein from Pasteurella multocida (strain Pm70).